We begin with the raw amino-acid sequence, 123 residues long: MPTIQQLIRNRREPIENRTKSPALRSCPQRRGVCTRVYTTTPKKPNSALRKVARVRLTSGFEVTAYIPGIGHNLQEHSVVLVRGGRVKDLPGVRYHIVRGTLDSVGVKDRHQGRSKYGAKKPK.

Belongs to the universal ribosomal protein uS12 family. Part of the 30S ribosomal subunit.

It localises to the plastid. Its subcellular location is the chloroplast. Functionally, with S4 and S5 plays an important role in translational accuracy. Located at the interface of the 30S and 50S subunits. The sequence is that of Small ribosomal subunit protein uS12c (rps12) from Chaetosphaeridium globosum (Charophycean green alga).